The primary structure comprises 568 residues: Oxygen-dependent choline dehydrogenase (568 aa).

An FAD-binding site is contributed by aspartate 8–glutamate 37. Residue histidine 477 is the Proton acceptor of the active site.

Belongs to the GMC oxidoreductase family. FAD serves as cofactor.

It catalyses the reaction choline + A = betaine aldehyde + AH2. The enzyme catalyses betaine aldehyde + NAD(+) + H2O = glycine betaine + NADH + 2 H(+). Its pathway is amine and polyamine biosynthesis; betaine biosynthesis via choline pathway; betaine aldehyde from choline (cytochrome c reductase route): step 1/1. Functionally, involved in the biosynthesis of the osmoprotectant glycine betaine. Catalyzes the oxidation of choline to betaine aldehyde and betaine aldehyde to glycine betaine at the same rate. This Pseudomonas syringae pv. syringae (strain B728a) protein is Oxygen-dependent choline dehydrogenase.